A 234-amino-acid polypeptide reads, in one-letter code: DEAD-box ATP-dependent RNA helicase 3 (234 aa).

The Q motif motif lies at 120-148; sequence LAVSRLGLPQKLVETLEKRGITKLFPIQR. A Helicase ATP-binding domain is found at 151–234; sequence LVPALEGRDI…RTVCVYGGVS (84 aa). 164-171 is an ATP binding site; it reads AKTGTGKT.

This sequence belongs to the DEAD box helicase family. DDX21/DDX50 subfamily.

The protein is DEAD-box ATP-dependent RNA helicase 3 of Helianthus annuus (Common sunflower).